A 223-amino-acid chain; its full sequence is Interleukin-12 subunit alpha (223 aa).

The N-terminal stretch at 1–23 (MCPSARSLLLLASLVLLEHLGSA) is a signal peptide. N-linked (GlcNAc...) asparagine glycosylation is found at N41, N79, N121, and N176. 2 cysteine pairs are disulfide-bonded: C66–C200 and C87–C125.

Belongs to the IL-6 superfamily. As to quaternary structure, heterodimer with IL12B; disulfide-linked. This heterodimer is known as interleukin IL-12. Heterodimer with EBI3/IL27B; not disulfide-linked. This heterodimer is known as interleukin IL-35. Interacts with NBR1; this interaction promotes IL-12 secretion.

It localises to the secreted. Functionally, heterodimerizes with IL12B to form the IL-12 cytokine or with EBI3/IL27B to form the IL-35 cytokine. IL-12 is primarily produced by professional antigen-presenting cells (APCs) such as B-cells and dendritic cells (DCs) as well as macrophages and granulocytes and regulates T-cell and natural killer-cell responses, induces the production of interferon-gamma (IFN-gamma), favors the differentiation of T-helper 1 (Th1) cells and is an important link between innate resistance and adaptive immunity. Mechanistically, exerts its biological effects through a receptor composed of IL12R1 and IL12R2 subunits. Binding to the receptor results in the rapid tyrosine phosphorylation of a number of cellular substrates including the JAK family kinases TYK2 and JAK2. In turn, recruited STAT4 gets phosphorylated and translocates to the nucleus where it regulates cytokine/growth factor responsive genes. As part of IL-35, plays essential roles in maintaining the immune homeostasis of the liver microenvironment and also functions as an immune-suppressive cytokine. Mediates biological events through unconventional receptors composed of IL12RB2 and gp130/IL6ST heterodimers or homodimers. Signaling requires the transcription factors STAT1 and STAT4, which form a unique heterodimer that binds to distinct DNA sites. This Marmota monax (Woodchuck) protein is Interleukin-12 subunit alpha (IL12A).